Consider the following 522-residue polypeptide: Probable G-protein coupled receptor egl-47 (522 aa).

7 helical membrane-spanning segments follow: residues 140-160 (IIKL…NSFL), 184-204 (ASMI…LSAI), 238-258 (FVFF…KVVE), 276-296 (FILV…YHLY), 345-365 (PLLL…LYFL), 398-418 (ICWA…ICST), and 472-492 (LERT…LLLF).

Belongs to the G-protein coupled receptor family. Expressed in some neurons in the head, the HSN neurons and the PVQ interneurons of the tail.

It localises to the membrane. Functionally, orphan receptor. Regulates egg-laying probably by activating guanine nucleotide-binding protein goa-1, in the hermaphrodite-specific neurons (HSNs). In Caenorhabditis elegans, this protein is Probable G-protein coupled receptor egl-47.